Consider the following 102-residue polypeptide: Crustacean hyperglycemic hormones 3 (102 aa).

The N-terminal stretch at 1–22 (MIALRLIAVTLVVAMAASTTWA) is a signal peptide. 3 disulfide bridges follow: Cys35-Cys71, Cys51-Cys67, and Cys54-Cys80. At Val100 the chain carries Valine amide.

Belongs to the arthropod CHH/MIH/GIH/VIH hormone family.

The protein localises to the secreted. Functionally, hormone found in the sinus gland of isopods and decapods which controls the blood sugar level. Has a secretagogue action over the amylase released from the midgut gland. May act as a stress hormone and may be involved in the control of molting and reproduction. The sequence is that of Crustacean hyperglycemic hormones 3 (CHH3) from Penaeus monodon (Giant tiger prawn).